Consider the following 145-residue polypeptide: Transcription antitermination protein NusB (145 aa).

The protein belongs to the NusB family.

In terms of biological role, involved in transcription antitermination. Required for transcription of ribosomal RNA (rRNA) genes. Binds specifically to the boxA antiterminator sequence of the ribosomal RNA (rrn) operons. The chain is Transcription antitermination protein NusB from Paraburkholderia phymatum (strain DSM 17167 / CIP 108236 / LMG 21445 / STM815) (Burkholderia phymatum).